The following is a 98-amino-acid chain: Large ribosomal subunit protein uL23c (98 aa).

The protein belongs to the universal ribosomal protein uL23 family. In terms of assembly, part of the 50S ribosomal subunit.

Its subcellular location is the plastid. The protein localises to the chloroplast. Functionally, binds to 23S rRNA. This is Large ribosomal subunit protein uL23c (rpl23) from Thalassiosira pseudonana (Marine diatom).